The sequence spans 87 residues: DNA/RNA-binding protein Alba (87 aa).

K9 carries the post-translational modification N6-acetyllysine.

It belongs to the histone-like Alba family. Acetylated. Acetylation at Lys-9 decreases DNA-binding affinity.

The protein resides in the cytoplasm. It is found in the chromosome. Functionally, binds double-stranded DNA tightly but without sequence specificity. Involved in DNA compaction. The sequence is that of DNA/RNA-binding protein Alba from Methanocaldococcus jannaschii (strain ATCC 43067 / DSM 2661 / JAL-1 / JCM 10045 / NBRC 100440) (Methanococcus jannaschii).